The sequence spans 383 residues: Lipid-A-disaccharide synthase (383 aa).

The protein belongs to the LpxB family.

It catalyses the reaction 2-N,3-O-bis[(3R)-3-hydroxytetradecanoyl]-alpha-D-glucosaminyl 1-phosphate + UDP-2-N,3-O-bis[(3R)-3-hydroxytetradecanoyl]-alpha-D-glucosamine = lipid A disaccharide (E. coli) + UDP + H(+). The enzyme catalyses a lipid X + a UDP-2-N,3-O-bis[(3R)-3-hydroxyacyl]-alpha-D-glucosamine = a lipid A disaccharide + UDP + H(+). It functions in the pathway glycolipid biosynthesis; lipid IV(A) biosynthesis; lipid IV(A) from (3R)-3-hydroxytetradecanoyl-[acyl-carrier-protein] and UDP-N-acetyl-alpha-D-glucosamine: step 5/6. Its function is as follows. Condensation of UDP-2,3-diacylglucosamine and 2,3-diacylglucosamine-1-phosphate to form lipid A disaccharide, a precursor of lipid A, a phosphorylated glycolipid that anchors the lipopolysaccharide to the outer membrane of the cell. The sequence is that of Lipid-A-disaccharide synthase from Klebsiella pneumoniae subsp. pneumoniae (strain ATCC 700721 / MGH 78578).